The chain runs to 292 residues: 4'-phosphopantetheinyl transferase 1 (292 aa).

This sequence belongs to the P-Pant transferase superfamily.

It carries out the reaction apo-[ACP] + CoA = holo-[ACP] + adenosine 3',5'-bisphosphate + H(+). Functionally, transfers the 4'-phosphopantetheine moiety from coenzyme A to a Ser of an acyl-carrier-protein. The enzyme is able to transfer the cofactor to a broad range of enzymes with acyl- or peptidyl-carrier protein domains. Required for primary biological processes such as growth and asexual/sexual development, and activates target enzymes involved in the synthesis of metabolites such as fatty acids, nonribosomal peptides and polyketides such as the gamma-pyrones fusapyrone (FPY) and deoxyfusapyrone (dFPY). This chain is 4'-phosphopantetheinyl transferase 1, found in Fusarium mangiferae (Mango malformation disease fungus).